The primary structure comprises 187 residues: Elongation factor P (187 aa).

It belongs to the elongation factor P family.

The protein resides in the cytoplasm. It participates in protein biosynthesis; polypeptide chain elongation. Its function is as follows. Involved in peptide bond synthesis. Stimulates efficient translation and peptide-bond synthesis on native or reconstituted 70S ribosomes in vitro. Probably functions indirectly by altering the affinity of the ribosome for aminoacyl-tRNA, thus increasing their reactivity as acceptors for peptidyl transferase. This is Elongation factor P from Wolinella succinogenes (strain ATCC 29543 / DSM 1740 / CCUG 13145 / JCM 31913 / LMG 7466 / NCTC 11488 / FDC 602W) (Vibrio succinogenes).